A 210-amino-acid polypeptide reads, in one-letter code: N-(5'-phosphoribosyl)anthranilate isomerase (210 aa).

It belongs to the TrpF family.

The enzyme catalyses N-(5-phospho-beta-D-ribosyl)anthranilate = 1-(2-carboxyphenylamino)-1-deoxy-D-ribulose 5-phosphate. It participates in amino-acid biosynthesis; L-tryptophan biosynthesis; L-tryptophan from chorismate: step 3/5. The chain is N-(5'-phosphoribosyl)anthranilate isomerase from Staphylococcus aureus (strain Mu3 / ATCC 700698).